The chain runs to 707 residues: MDNSIHVKREIQLPSTSPAGFPGRESVTVVDLCSSDDDSDIGEVAGGLEKVGNNFVGLKRGRDTFGGSSEVDRNNVKKVTTLAELGVGLPEGFGQSNPPESLTHPIPANPCNVFRPVPPPPPPPYAGTSGKIGGCKQFWKAGDYEGAAGDNWDLSSGGFDHVRVHPKFLHSNATSHKWALGAFAELLDNALDEVASGATYVKVDMLENNKGGNRMLLIEDNGGGMDPEKMRQCMSLGYSAKSKLANTIGQYGNGFKTSTMRLGADVIVFSRCPGKDGKSSTQSIGLLSYTFLRSTGKEDIVVPMLDYERRDPEWSKIIRSSTRDWDKNVETIIQWSPFSSEEDLLHQFDLMKDRGTRIIIYNLWEDDQGMLELDFDADPYDIQLRGVNREERNIKMASQFPNSRHFLTYKHSLRSYVSILYLRIPPGFRIILRGIDVEHHSVVNDMMQTEQITYRPQSESYGVVTNMSAIVIIGFVKDAKHHVDVQGFNVYHKNRLIKPFWRIWNATGSDGRGVIGVLEANFVEPAHDKQGFERTTVLARLESRLVQMQKTYWSTNCHKIGYAPRRREKSAYGYDNRDSSPENDREGPSSIKTPTPASDKFYSSSYPNHNGDNGVSGKDGARLQEELRREKERRKALEVEVQLSRQKIEEMKKEQENLIEIFSEERDRRDGEEEVLRNKLEEASNTIDDLLNKIKKMEGSKVPSWRH.

Basic and acidic residues-rich tracts occupy residues 1–11 (MDNSIHVKREI) and 575–587 (DNRD…DREG). Disordered stretches follow at residues 1–22 (MDNS…AGFP) and 568–619 (EKSA…SGKD). Residues 590–613 (SIKTPTPASDKFYSSSYPNHNGDN) are compositionally biased toward polar residues. Residues 620 to 701 (GARLQEELRR…NKIKKMEGSK (82 aa)) are a coiled coil. A Nuclear localization signal motif is present at residues 633 to 640 (RRKALEVE).

It belongs to the MORC ATPase protein family. Homodimer and heterodimer. Component of an RNA-directed DNA methylation (RdDM) complex. Forms homomeric complexes. It depends on Mg(2+) as a cofactor. Requires Mn(2+) as cofactor.

The protein resides in the nucleus. Its function is as follows. Exhibits ATPase activity. Binds DNA/RNA in a non-specific manner and exhibits endonuclease activity. Probably involved in DNA repair. Involved in RNA-directed DNA methylation (RdDM) as a component of the RdDM machinery and required for gene silencing. May also be involved in the regulation of chromatin architecture to maintain gene silencing. Together with MORC4, acts to suppress a wide set of non-methylated protein-coding genes, especially involved in pathogen response. Positive regulators of defense against the oomycete Hyaloperonospora arabidopsidis (Hpa). In Arabidopsis thaliana (Mouse-ear cress), this protein is Protein MICRORCHIDIA 7.